Reading from the N-terminus, the 258-residue chain is Glutathione S-transferase DHAR3, chloroplastic (258 aa).

Residues 1-42 (MISLRFQPSTTAGVLSASVSRAGFIKRCGSTKPGRVGRFVTM) constitute a chloroplast transit peptide. Cys52 is subject to S-glutathionyl cysteine. The glutathione site is built by Lys54 and Asp65. The L-ascorbate site is built by Lys54 and Asp65. The GST N-terminal domain occupies 56–129 (SITTPNKLGD…DVITQALEEK (74 aa)). Cys66 functions as the Nucleophile in the catalytic mechanism. Cys66 and Cys69 form a disulfide bridge. Residues 66–71 (CPFCQK) carry the Glutathione-binding motif. Lys93, Val106, Ser119, His205, and Trp252 together coordinate glutathione. The 129-residue stretch at 130–258 (YPEPPLATPP…IAGWRPKVMG (129 aa)) folds into the GST C-terminal domain. Lys255 is a binding site for L-ascorbate.

This sequence belongs to the GST superfamily. DHAR family. Monomer. Interacts with TRX3. Post-translationally, partial S-glutathionylation and intramolecular disulfide bond formation between Cys-66 and Cys-69 in the presence of oxidized glutathione (GSSG). Could be reduced by TRX-dependent process.

It localises to the plastid. It is found in the chloroplast stroma. The enzyme catalyses RX + glutathione = an S-substituted glutathione + a halide anion + H(+). The catalysed reaction is L-dehydroascorbate + 2 glutathione = glutathione disulfide + L-ascorbate. In terms of biological role, displays a dual function. As a soluble protein, exhibits glutathione-dependent thiol transferase and dehydroascorbate (DHA) reductase activities. Key component of the ascorbate recycling system. Involved in the redox homeostasis, especially in scavenging of ROS under oxidative stresses. This Arabidopsis thaliana (Mouse-ear cress) protein is Glutathione S-transferase DHAR3, chloroplastic (DHAR3).